The following is a 98-amino-acid chain: Integration host factor subunit alpha (98 aa).

Residues 49 to 71 (FGNFDLRDKNQRPGRNPKTGEDI) form a disordered region.

This sequence belongs to the bacterial histone-like protein family. As to quaternary structure, heterodimer of an alpha and a beta chain.

This protein is one of the two subunits of integration host factor, a specific DNA-binding protein that functions in genetic recombination as well as in transcriptional and translational control. The protein is Integration host factor subunit alpha of Shewanella oneidensis (strain ATCC 700550 / JCM 31522 / CIP 106686 / LMG 19005 / NCIMB 14063 / MR-1).